A 417-amino-acid chain; its full sequence is Phosphoglycerate kinase (417 aa).

14 residues coordinate (2R)-3-phosphoglycerate: Val-23, Asp-24, Phe-25, Asn-26, Gln-38, Arg-39, Ser-62, His-63, Gly-65, Arg-66, Leu-121, Arg-122, His-169, and Arg-170. Gly-213 contributes to the ADP binding site. Gly-213 is a binding site for CDP. AMP is bound by residues Ala-214 and Lys-215. Ala-214 contributes to the ATP binding site. Residue Ala-214 participates in Mg(2+) binding. Position 218 (Asp-218) interacts with CDP. Asp-218 contributes to the Mg(2+) binding site. Residue Lys-219 coordinates AMP. An ATP-binding site is contributed by Lys-219. Position 237 (Gly-237) interacts with ADP. CDP is bound at residue Gly-237. AMP contacts are provided by Gly-238 and Gly-312. 2 residues coordinate ATP: Gly-238 and Gly-312. Gly-337 and Phe-342 together coordinate CDP. Phe-342 contacts ADP. Glu-343 is an AMP binding site. Positions 343, 374, and 375 each coordinate ATP. Asp-374 is a binding site for Mg(2+).

The protein belongs to the phosphoglycerate kinase family. Monomer. Requires Mg(2+) as cofactor.

It is found in the cytoplasm. The protein resides in the mitochondrion. The catalysed reaction is (2R)-3-phosphoglycerate + ATP = (2R)-3-phospho-glyceroyl phosphate + ADP. The protein operates within carbohydrate degradation; glycolysis; pyruvate from D-glyceraldehyde 3-phosphate: step 2/5. In terms of biological role, catalyzes one of the two ATP producing reactions in the glycolytic pathway via the reversible conversion of 1,3-diphosphoglycerate to 3-phosphoglycerate. Both L- and D- forms of purine and pyrimidine nucleotides can be used as substrates, but the activity is much lower on pyrimidines. Negatively regulates the biosynthesis of acetyl-CoA from pyruvate in the mitochondrion. In Yarrowia lipolytica (strain CLIB 122 / E 150) (Yeast), this protein is Phosphoglycerate kinase (PGK1).